The chain runs to 51 residues: Large ribosomal subunit protein eL39 (51 aa).

Positions 32-51 (KGSVKQHPKMRHWRRKNLKK) are disordered. Positions 33–51 (GSVKQHPKMRHWRRKNLKK) are enriched in basic residues.

The protein belongs to the eukaryotic ribosomal protein eL39 family.

This chain is Large ribosomal subunit protein eL39, found in Methanococcus maripaludis (strain C5 / ATCC BAA-1333).